The primary structure comprises 201 residues: Probable molybdenum cofactor guanylyltransferase (201 aa).

GTP contacts are provided by residues 6–8 (LAG), Lys18, Asp65, and Asp97. Asp97 provides a ligand contact to Mg(2+).

The protein belongs to the MobA family. The cofactor is Mg(2+).

It localises to the cytoplasm. It catalyses the reaction Mo-molybdopterin + GTP + H(+) = Mo-molybdopterin guanine dinucleotide + diphosphate. Transfers a GMP moiety from GTP to Mo-molybdopterin (Mo-MPT) cofactor (Moco or molybdenum cofactor) to form Mo-molybdopterin guanine dinucleotide (Mo-MGD) cofactor. This chain is Probable molybdenum cofactor guanylyltransferase, found in Staphylococcus haemolyticus (strain JCSC1435).